Consider the following 98-residue polypeptide: NADH-ubiquinone oxidoreductase chain 4L (98 aa).

A run of 3 helical transmembrane segments spans residues 1–21 (MTPTHFTISSAFLLGMMGLAF), 26–46 (LLSALLCLEAMMLALFIALSL), and 59–79 (APMLMLAFSACEASAGLALLV).

Belongs to the complex I subunit 4L family.

Its subcellular location is the mitochondrion membrane. The enzyme catalyses a ubiquinone + NADH + 5 H(+)(in) = a ubiquinol + NAD(+) + 4 H(+)(out). Its function is as follows. Core subunit of the mitochondrial membrane respiratory chain NADH dehydrogenase (Complex I) which catalyzes electron transfer from NADH through the respiratory chain, using ubiquinone as an electron acceptor. Part of the enzyme membrane arm which is embedded in the lipid bilayer and involved in proton translocation. This is NADH-ubiquinone oxidoreductase chain 4L (MT-ND4L) from Gadus morhua (Atlantic cod).